The primary structure comprises 156 residues: Cyclic pyranopterin monophosphate synthase (156 aa).

Substrate is bound by residues 75–77 (LCH) and 111–112 (ME). Residue Asp-126 is part of the active site.

This sequence belongs to the MoaC family. Homohexamer; trimer of dimers.

It catalyses the reaction (8S)-3',8-cyclo-7,8-dihydroguanosine 5'-triphosphate = cyclic pyranopterin phosphate + diphosphate. It functions in the pathway cofactor biosynthesis; molybdopterin biosynthesis. In terms of biological role, catalyzes the conversion of (8S)-3',8-cyclo-7,8-dihydroguanosine 5'-triphosphate to cyclic pyranopterin monophosphate (cPMP). This chain is Cyclic pyranopterin monophosphate synthase, found in Corynebacterium glutamicum (strain R).